We begin with the raw amino-acid sequence, 443 residues long: Glutamate--tRNA ligase 1 (443 aa).

The 'HIGH' region signature appears at 10–20 (PSPTGYIHVGN). Positions 241-245 (ALSKR) match the 'KMSKS' region motif. Position 244 (lysine 244) interacts with ATP.

This sequence belongs to the class-I aminoacyl-tRNA synthetase family. Glutamate--tRNA ligase type 1 subfamily. In terms of assembly, monomer.

The protein localises to the cytoplasm. It catalyses the reaction tRNA(Glu) + L-glutamate + ATP = L-glutamyl-tRNA(Glu) + AMP + diphosphate. In terms of biological role, catalyzes the attachment of glutamate to tRNA(Glu) in a two-step reaction: glutamate is first activated by ATP to form Glu-AMP and then transferred to the acceptor end of tRNA(Glu). The chain is Glutamate--tRNA ligase 1 from Ruegeria pomeroyi (strain ATCC 700808 / DSM 15171 / DSS-3) (Silicibacter pomeroyi).